Consider the following 248-residue polypeptide: DCN1-like protein 4 (248 aa).

The tract at residues 1–35 is disordered; sequence MPRGKRRAADTISDNMDHGQPKRARTSYTSIPTQQ. Residues 26-35 show a composition bias toward polar residues; sequence TSYTSIPTQQ. The 189-residue stretch at 47-235 folds into the DCUN1 domain; it reads FSQKRCMAWF…MLDEFVEWLR (189 aa).

The protein localises to the nucleus. In terms of biological role, inhibits neddylation of cullin components of SCF-type E3 ubiquitin ligase complexes and thus regulates SCF-type complex activity. Essential for development. Function inhibits cell proliferation and cell growth. This chain is DCN1-like protein 4, found in Drosophila melanogaster (Fruit fly).